The chain runs to 143 residues: Large ribosomal subunit protein uL15 (143 aa).

Positions 1–47 are disordered; sequence MKLHELTPSEGSRFSRRRIGRGDSSGQGKTSGRGQKGQKARGKVRVG. Residues 23–35 are compositionally biased toward gly residues; sequence DSSGQGKTSGRGQ.

It belongs to the universal ribosomal protein uL15 family. Part of the 50S ribosomal subunit.

In terms of biological role, binds to the 23S rRNA. The polypeptide is Large ribosomal subunit protein uL15 (Lactiplantibacillus plantarum (strain ATCC BAA-793 / NCIMB 8826 / WCFS1) (Lactobacillus plantarum)).